The primary structure comprises 279 residues: Formamidopyrimidine-DNA glycosylase (279 aa).

Pro2 serves as the catalytic Schiff-base intermediate with DNA. Catalysis depends on Glu3, which acts as the Proton donor. Residue Lys58 is the Proton donor; for beta-elimination activity of the active site. DNA contacts are provided by His92, Arg111, and Arg153. The FPG-type zinc-finger motif lies at 238–272 (TVYGKEGQSCLSCSSTIIKTKHSGRSTFYCKTCQY). Catalysis depends on Arg262, which acts as the Proton donor; for delta-elimination activity.

It belongs to the FPG family. Monomer. Requires Zn(2+) as cofactor.

The enzyme catalyses Hydrolysis of DNA containing ring-opened 7-methylguanine residues, releasing 2,6-diamino-4-hydroxy-5-(N-methyl)formamidopyrimidine.. It carries out the reaction 2'-deoxyribonucleotide-(2'-deoxyribose 5'-phosphate)-2'-deoxyribonucleotide-DNA = a 3'-end 2'-deoxyribonucleotide-(2,3-dehydro-2,3-deoxyribose 5'-phosphate)-DNA + a 5'-end 5'-phospho-2'-deoxyribonucleoside-DNA + H(+). Its function is as follows. Involved in base excision repair of DNA damaged by oxidation or by mutagenic agents. Acts as a DNA glycosylase that recognizes and removes damaged bases. Has a preference for oxidized purines, such as 7,8-dihydro-8-oxoguanine (8-oxoG). Has AP (apurinic/apyrimidinic) lyase activity and introduces nicks in the DNA strand. Cleaves the DNA backbone by beta-delta elimination to generate a single-strand break at the site of the removed base with both 3'- and 5'-phosphates. This Rickettsia massiliae (strain Mtu5) protein is Formamidopyrimidine-DNA glycosylase.